Consider the following 431-residue polypeptide: uncharacterized protein (431 aa).

4 consecutive transmembrane segments (helical) span residues 228–248 (GLLS…HYLS), 279–299 (IGLP…NFTF), 349–369 (ILWP…FLWI), and 388–408 (MIFN…LKLY).

Its subcellular location is the membrane. This is an uncharacterized protein from Saccharomyces cerevisiae (strain ATCC 204508 / S288c) (Baker's yeast).